The chain runs to 261 residues: uncharacterized protein (261 aa).

The N-terminal stretch at 1–22 (MGYSKRFALYISVMILIFAIAG) is a signal peptide. Cys23 carries the N-palmitoyl cysteine lipid modification. Cys23 is lipidated: S-diacylglycerol cysteine.

The protein belongs to the staphylococcal tandem lipoprotein family.

The protein resides in the cell membrane. This is an uncharacterized protein from Staphylococcus aureus (strain N315).